Reading from the N-terminus, the 695-residue chain is Phenoloxidase subunit 2 (695 aa).

The Cu cation site is built by histidine 215, histidine 219, and histidine 245. Glutamate 353 acts as the Proton acceptor in catalysis. The Cu cation site is built by histidine 368, histidine 372, and histidine 408. Cystine bridges form between cysteine 586–cysteine 630 and cysteine 588–cysteine 637.

As to quaternary structure, heterodimer. Forms a complex with an interleukin 1-like protein as a consequence of a host defense response. Cu(2+) is required as a cofactor. In terms of processing, the N-terminus is blocked. Synthesized by oenocytoids, a type of hemocyte, and released into the hemolymph plasma.

The protein resides in the secreted. It carries out the reaction 2 L-dopa + O2 = 2 L-dopaquinone + 2 H2O. It catalyses the reaction L-tyrosine + O2 = L-dopaquinone + H2O. Its activity is regulated as follows. Activated by immulectin and lipopolysaccharide. This is a copper-containing oxidase that functions in the formation of pigments such as melanins and other polyphenolic compounds. Catalyzes the rate-limiting conversions of tyrosine to DOPA, DOPA to DOPA-quinone and possibly 5,6 dihydroxyindole to indole-5'6 quinone. Binds to the surface of hemocytes and is involved in hemocyte melanization. The protein is Phenoloxidase subunit 2 of Manduca sexta (Tobacco hawkmoth).